The following is a 338-amino-acid chain: Structural protein VP9 (338 aa).

It localises to the virion. Functionally, plays an important role in virus transmission by the insect vector. May participate in the virus stability by binding clamp proteins and surrounding the pentameric turrets present in the virion. The polypeptide is Structural protein VP9 (Rice ragged stunt virus (isolate Thailand) (RRSV)).